Reading from the N-terminus, the 97-residue chain is Defensin-like protein 301 (97 aa).

Residues 1–24 (MEKVTSIFFVLLLISSCLILRSQG) form the signal peptide. 6 cysteine pairs are disulfide-bonded: Cys28–Cys47, Cys34–Cys53, Cys39–Cys55, Cys65–Cys84, Cys71–Cys92, and Cys76–Cys94.

Belongs to the DEFL family.

It localises to the secreted. This Arabidopsis thaliana (Mouse-ear cress) protein is Defensin-like protein 301.